The primary structure comprises 274 residues: Sulfur carrier protein FdhD (274 aa).

The Cysteine persulfide intermediate role is filled by cysteine 121. Mo-bis(molybdopterin guanine dinucleotide) is bound at residue 258–263; that stretch reads FSKPGR.

This sequence belongs to the FdhD family.

It is found in the cytoplasm. Functionally, required for formate dehydrogenase (FDH) activity. Acts as a sulfur carrier protein that transfers sulfur from IscS to the molybdenum cofactor prior to its insertion into FDH. The protein is Sulfur carrier protein FdhD of Yersinia pseudotuberculosis serotype IB (strain PB1/+).